The sequence spans 89 residues: MFAIMTVTGQDHTGIIAAVSTALAELDVNIHNVSQTIMDQWFTMILHVGFDESVLDIATVQERMKPVEKEQGLVIRIQSEALFNAVNEI.

The ACT domain occupies 4-82 (IMTVTGQDHT…LVIRIQSEAL (79 aa)).

The protein belongs to the UPF0237 family.

The protein is UPF0237 protein Cgl1544/cg1742 of Corynebacterium glutamicum (strain ATCC 13032 / DSM 20300 / JCM 1318 / BCRC 11384 / CCUG 27702 / LMG 3730 / NBRC 12168 / NCIMB 10025 / NRRL B-2784 / 534).